The chain runs to 60 residues: Large ribosomal subunit protein bL32 (60 aa).

Basic residues predominate over residues 1 to 16 (MAVPKRKTSPSKRGMR). Residues 1–60 (MAVPKRKTSPSKRGMRRSADALKAPTYVEDKNSGELRRPHHVDLKTGMYRGRQVLEPKEA) form a disordered region. The span at 28-44 (VEDKNSGELRRPHHVDL) shows a compositional bias: basic and acidic residues.

The protein belongs to the bacterial ribosomal protein bL32 family.

This is Large ribosomal subunit protein bL32 from Chelativorans sp. (strain BNC1).